The sequence spans 368 residues: MSLNLQTYTEHFTNPLYLESGRILEPYDITYETYGTMNEDKSNVVVVCHALTGSHHAAGLYEDETKPGWWDGFIGSGKAIDTDKYFVICSNVIGSCFGSTGPMSLQHPYQEPYRYKFPVVSIKDMVKAQRILFDRLDIHRVHAIVGGSMGGMQALQFAIHYPNFANKIIALATTHATQPWAIAFNKVAQESILNDPDFKQGYYDPDLLKEQGLSGMAVGRMAGHISFLSHESMREKFGRDYKLTDGLYELFGKFQVESYLEYNGYNFTKWFDPLAYLYITKAINIYDLSRGFDSLAEALKRVTSALYLVSFKNDLLFKNFEMKEIADELDKIGNKNHSYIDVKSDYGHDAFLVELNKFENHVKDALNG.

The AB hydrolase-1 domain occupies 43 to 354 (NVVVVCHALT…DYGHDAFLVE (312 aa)). S148 (nucleophile) is an active-site residue. R220 is a binding site for substrate. Active-site residues include D314 and H348. D349 contributes to the substrate binding site.

Belongs to the AB hydrolase superfamily. MetX family. As to quaternary structure, homodimer.

Its subcellular location is the cytoplasm. The catalysed reaction is L-homoserine + acetyl-CoA = O-acetyl-L-homoserine + CoA. Its pathway is amino-acid biosynthesis; L-methionine biosynthesis via de novo pathway; O-acetyl-L-homoserine from L-homoserine: step 1/1. Its function is as follows. Transfers an acetyl group from acetyl-CoA to L-homoserine, forming acetyl-L-homoserine. The sequence is that of Homoserine O-acetyltransferase from Sulfurimonas autotrophica (strain ATCC BAA-671 / DSM 16294 / JCM 11897 / OK10).